The following is a 468-amino-acid chain: ATP synthase subunit beta (468 aa).

155 to 162 (GGAGVGKT) serves as a coordination point for ATP.

It belongs to the ATPase alpha/beta chains family. F-type ATPases have 2 components, CF(1) - the catalytic core - and CF(0) - the membrane proton channel. CF(1) has five subunits: alpha(3), beta(3), gamma(1), delta(1), epsilon(1). CF(0) has three main subunits: a(1), b(2) and c(9-12). The alpha and beta chains form an alternating ring which encloses part of the gamma chain. CF(1) is attached to CF(0) by a central stalk formed by the gamma and epsilon chains, while a peripheral stalk is formed by the delta and b chains.

It localises to the cell membrane. It catalyses the reaction ATP + H2O + 4 H(+)(in) = ADP + phosphate + 5 H(+)(out). Its function is as follows. Produces ATP from ADP in the presence of a proton gradient across the membrane. The catalytic sites are hosted primarily by the beta subunits. This Streptococcus pneumoniae (strain Taiwan19F-14) protein is ATP synthase subunit beta.